A 784-amino-acid polypeptide reads, in one-letter code: Toll-like receptor 2 (784 aa).

Residues 1–20 (MPHALWTVWVLGAVISLSKE) form the signal peptide. The Extracellular portion of the chain corresponds to 21–587 (GVPDQPSSLS…THLSVSECHR (567 aa)). A disulfide bond links Cys31 and Cys37. LRR repeat units lie at residues 54 to 77 (AVKSLDLSNNKIASVGNSDLWKCV), 78 to 101 (NLKALRLGSNDINTIEEDSFSSLR), 102 to 125 (SLEHLDLSNNHLSNLSSSWFRPLS), 126 to 150 (SLKFLNLLGSTYKTLGETSLFSHLT), 151 to 175 (NLRILKVGNIHFTEIQGKDFAGLTF), 176 to 199 (LEELEIDATNLQRYEPKSFKSIQN), 200 to 223 (ISHLILRMKQPVLLPEIILDTLSS), 224 to 250 (LEYLELRDTYLNTFHFAEVSDPETNTL), 251 to 278 (IKKFTFRNVKITDESFDEIVKLLNYISG), 279 to 308 (VSEAEFDECTLDGLGEFRTPDIDKIKVIGK), 309 to 337 (LETLTIRRLRIPQFYLFRDLSSIYSLTER), 338 to 361 (VKRITIENSKVFLVPCSLSRHLKS), 362 to 388 (LEYLDLSDNLMVEEYLKNSACERAWPS), 389 to 414 (LQTLILRQNHLTSLGKTGETLLTLKN), 415 to 437 (LTKLDISKNSFHSMPETCQWPEK), 438 to 457 (MKYLNLSSIRIDRLTQCIPQ), 458 to 478 (TLEVLDISNNNLNSFSLILPQ), 479 to 500 (VKELYISRNKLKTLPDASFLPM), and 501 to 524 (LLVMRISRKTINTFSKEQLDSFQK). N-linked (GlcNAc...) asparagine glycosylation is present at Asn115. Asn199 carries N-linked (GlcNAc...) asparagine glycosylation. Residues Cys353 and Cys382 are joined by a disulfide bond. Asn414 carries N-linked (GlcNAc...) asparagine glycosylation. Cys432 and Cys454 are joined by a disulfide. N-linked (GlcNAc...) asparagine glycosylation is present at Asn442. An LRRCT domain is found at 525 to 579 (LKTLEAGGNNFICSCEFLSFTQEEQALDQILIDWPENYLCDSPSHVRGQRVQDTH). Residues 588 to 608 (TALVSAVCCALFLSILLTGVL) form a helical membrane-spanning segment. Over 609 to 784 (CHHFHGLWYM…WLNLRAAIKS (176 aa)) the chain is Cytoplasmic. The region spanning 639-782 (ICYDAFVSYS…GFWLNLRAAI (144 aa)) is the TIR domain. Residue Lys754 forms a Glycyl lysine isopeptide (Lys-Gly) (interchain with G-Cter in ubiquitin) linkage. An ATG16L1-binding motif motif is present at residues 761–778 (YLEWPTDEAQQEGFWLNL).

The protein belongs to the Toll-like receptor family. Interacts with LY96, TLR1 and TLR6 (via extracellular domain). TLR2 seems to exist in heterodimers with either TLR1 or TLR6 before stimulation by the ligand. The heterodimers form bigger oligomers in response to their corresponding ligands as well as further heterotypic associations with other receptors such as CD14 and/or CD36. Binds MYD88 (via TIR domain). Interacts with TICAM1. Interacts with CNPY3. Interacts with ATG16L1. Interacts with PPP1R11. Interacts with TICAM2. Interacts with TIRAP. Post-translationally, ubiquitinated at Lys-754 by PPP1R11, leading to its degradation. Deubiquitinated by USP2. Glycosylation of Asn-442 is critical for secretion of the N-terminal ectodomain of TLR2.

The protein resides in the membrane. Its subcellular location is the cytoplasmic vesicle. It localises to the phagosome membrane. The protein localises to the membrane raft. Cooperates with LY96 to mediate the innate immune response to bacterial lipoproteins and other microbial cell wall components. Cooperates with TLR1 or TLR6 to mediate the innate immune response to bacterial lipoproteins or lipopeptides. Acts via MYD88 and TRAF6, leading to NF-kappa-B activation, cytokine secretion and the inflammatory response. May also promote apoptosis in response to lipoproteins. Forms activation clusters composed of several receptors depending on the ligand, these clusters trigger signaling from the cell surface and subsequently are targeted to the Golgi in a lipid-raft dependent pathway. Forms the cluster TLR2:TLR6:CD14:CD36 in response to diacylated lipopeptides and TLR2:TLR1:CD14 in response to triacylated lipopeptides. The protein is Toll-like receptor 2 (TLR2) of Equus caballus (Horse).